We begin with the raw amino-acid sequence, 422 residues long: NADH-quinone oxidoreductase subunit D 1 (422 aa).

This sequence belongs to the complex I 49 kDa subunit family. As to quaternary structure, NDH-1 is composed of 14 different subunits. Subunits NuoB, C, D, E, F, and G constitute the peripheral sector of the complex.

It localises to the cell membrane. The catalysed reaction is a quinone + NADH + 5 H(+)(in) = a quinol + NAD(+) + 4 H(+)(out). NDH-1 shuttles electrons from NADH, via FMN and iron-sulfur (Fe-S) centers, to quinones in the respiratory chain. The immediate electron acceptor for the enzyme in this species is believed to be ubiquinone. Couples the redox reaction to proton translocation (for every two electrons transferred, four hydrogen ions are translocated across the cytoplasmic membrane), and thus conserves the redox energy in a proton gradient. The protein is NADH-quinone oxidoreductase subunit D 1 of Herpetosiphon aurantiacus (strain ATCC 23779 / DSM 785 / 114-95).